The chain runs to 515 residues: ADP,ATP carrier protein 1 (515 aa).

12 helical membrane-spanning segments follow: residues 24–44 (LKKV…YTVL), 62–82 (AIPF…MLIY), 93–113 (ALFY…PTVI), 124–144 (EFAD…VAIL), 149–169 (FAAF…LMFW), 184–204 (FYAL…RAIV), 226–246 (LLMA…WWIN), 286–306 (YILL…LIEV), 329–349 (FSFW…GNVI), 358–378 (ALVT…LVIF), 383–403 (SGLV…VGAI), and 465–485 (IGAM…IWLV).

This sequence belongs to the ADP/ATP translocase tlc family.

The protein resides in the cell membrane. In Chlamydia pneumoniae (Chlamydophila pneumoniae), this protein is ADP,ATP carrier protein 1 (tlcA).